We begin with the raw amino-acid sequence, 331 residues long: Putative ankyrin repeat protein RBE_0261 (331 aa).

The stretch at 94 to 159 is one ANK repeat; sequence QGENVIHKCV…KAKNTLLNIV (66 aa).

This Rickettsia bellii (strain RML369-C) protein is Putative ankyrin repeat protein RBE_0261.